The chain runs to 198 residues: Putative 3-methyladenine DNA glycosylase (198 aa).

The protein belongs to the DNA glycosylase MPG family.

This is Putative 3-methyladenine DNA glycosylase from Natranaerobius thermophilus (strain ATCC BAA-1301 / DSM 18059 / JW/NM-WN-LF).